The sequence spans 267 residues: Dihydropteroate synthase (267 aa).

One can recognise a Pterin-binding domain in the interval 1–251; the sequence is MTKTKIMGIL…NVELNAKLAK (251 aa). Residue N11 coordinates Mg(2+). (7,8-dihydropterin-6-yl)methyl diphosphate-binding positions include T51, D84, N103, D167, K203, and 239–241; that span reads RVH.

The protein belongs to the DHPS family. As to quaternary structure, homodimer. Requires Mg(2+) as cofactor.

The enzyme catalyses (7,8-dihydropterin-6-yl)methyl diphosphate + 4-aminobenzoate = 7,8-dihydropteroate + diphosphate. The protein operates within cofactor biosynthesis; tetrahydrofolate biosynthesis; 7,8-dihydrofolate from 2-amino-4-hydroxy-6-hydroxymethyl-7,8-dihydropteridine diphosphate and 4-aminobenzoate: step 1/2. Catalyzes the condensation of para-aminobenzoate (pABA) with 6-hydroxymethyl-7,8-dihydropterin diphosphate (DHPt-PP) to form 7,8-dihydropteroate (H2Pte), the immediate precursor of folate derivatives. The chain is Dihydropteroate synthase (folP) from Staphylococcus aureus (strain Mu50 / ATCC 700699).